A 188-amino-acid chain; its full sequence is Mediator of RNA polymerase II transcription subunit 29 (188 aa).

Residues methionine 1–proline 11 are compositionally biased toward polar residues. Residues methionine 1–glycine 27 are disordered.

It belongs to the Mediator complex subunit 29 family. In terms of assembly, component of the Mediator complex.

Its subcellular location is the nucleus. Functionally, component of the Mediator complex, a coactivator involved in the regulated transcription of nearly all RNA polymerase II-dependent genes. Mediator functions as a bridge to convey information from gene-specific regulatory proteins to the basal RNA polymerase II transcription machinery. Mediator is recruited to promoters by direct interactions with regulatory proteins and serves as a scaffold for the assembly of a functional preinitiation complex with RNA polymerase II and the general transcription factors. The sequence is that of Mediator of RNA polymerase II transcription subunit 29 (med29) from Xenopus tropicalis (Western clawed frog).